A 73-amino-acid polypeptide reads, in one-letter code: MTVDPEELRKMETGDLLKKLDELKLELIKLRVQSRMGTLKNTASIRNTRKDIARILTVLSEKKKVKREKVENK.

The protein belongs to the universal ribosomal protein uL29 family.

The sequence is that of Large ribosomal subunit protein uL29 (rpl29) from Saccharolobus solfataricus (strain ATCC 35092 / DSM 1617 / JCM 11322 / P2) (Sulfolobus solfataricus).